Here is a 154-residue protein sequence, read N- to C-terminus: Myoglobin (154 aa).

A Globin domain is found at 2 to 148 (GLSDGEWQLV…FRNDIAAKYK (147 aa)). The residue at position 4 (S4) is a Phosphoserine. H65 serves as a coordination point for nitrite. O2 is bound at residue H65. T68 carries the phosphothreonine modification. H94 contacts heme b.

The protein belongs to the globin family. Monomeric.

The protein resides in the cytoplasm. It localises to the sarcoplasm. The catalysed reaction is Fe(III)-heme b-[protein] + nitric oxide + H2O = Fe(II)-heme b-[protein] + nitrite + 2 H(+). It catalyses the reaction H2O2 + AH2 = A + 2 H2O. In terms of biological role, monomeric heme protein which primary function is to store oxygen and facilitate its diffusion within muscle tissues. Reversibly binds oxygen through a pentacoordinated heme iron and enables its timely and efficient release as needed during periods of heightened demand. Depending on the oxidative conditions of tissues and cells, and in addition to its ability to bind oxygen, it also has a nitrite reductase activity whereby it regulates the production of bioactive nitric oxide. Under stress conditions, like hypoxia and anoxia, it also protects cells against reactive oxygen species thanks to its pseudoperoxidase activity. In Ondatra zibethicus (Muskrat), this protein is Myoglobin (MB).